A 115-amino-acid chain; its full sequence is uncharacterized protein (115 aa).

A run of 3 helical transmembrane segments spans residues 7–27, 40–60, and 72–92; these read TLIF…IWFD, YALT…LLAA, and IVLV…YFYL.

Its subcellular location is the cell membrane. This is an uncharacterized protein from Haemophilus influenzae (strain ATCC 51907 / DSM 11121 / KW20 / Rd).